The following is a 577-amino-acid chain: MNIQALLSEKVRQAMIAAGAPADCEPQVRQSAKVQFGDYQANGMMAVAKKLGMAPRQLAEQVLTHLDLNGIASKVEIAGPGFINIFLDPAFLAEHVQQALASDRLGVSTPEKQTIVVDYSAPNVAKEMHVGHLRSTIIGDAAVRTLEFLGHKVIRANHVGDWGTQFGMLIAWLEKQQQENAGEMELADLEGFYRDAKKHYDEDEEFAERARNYVVKLQSGDEYFREMWRKLVDITMTQNQITYDRLNVTLTRDDVMGESLYNPMLPGIVADLKAKGLAVESEGATVVFLDEFKNKEGEPMGVIIQKKDGGYLYTTTDIACAKYRYETLHADRVLYYIDSRQHQHLMQAWAIVRKAGYVPESVPLEHHMFGMMLGKDGKPFKTRAGGTVKLADLLDEALERARRLVAEKNPDMPADELEKLANAVGIGAVKYADLSKNRTTDYIFDWDNMLAFEGNTAPYMQYAYTRVLSVFRKAEINEEQLAAAPVIIREDREAQLAARLLQFEETLTVVAREGTPHVMCAYLYDLAGLFSGFYEHCPILSAENEEVRNSRLKLAQLTAKTLKLGLDTLGIETVERM.

The 'HIGH' region signature appears at 122-132 (PNVAKEMHVGH).

The protein belongs to the class-I aminoacyl-tRNA synthetase family. Monomer.

It localises to the cytoplasm. The enzyme catalyses tRNA(Arg) + L-arginine + ATP = L-arginyl-tRNA(Arg) + AMP + diphosphate. This Escherichia coli O8 (strain IAI1) protein is Arginine--tRNA ligase.